Consider the following 342-residue polypeptide: Isopentenyl-diphosphate delta-isomerase (342 aa).

A substrate-binding site is contributed by 11–12 (RK). FMN contacts are provided by residues serine 68, 69–71 (SMT), serine 99, and asparagine 128. 99-101 (SQR) serves as a coordination point for substrate. Position 162 (glutamine 162) interacts with substrate. Glutamate 163 lines the Mg(2+) pocket. FMN contacts are provided by residues lysine 194, serine 219, threonine 224, 275–277 (GVR), and 296–297 (AK).

The protein belongs to the IPP isomerase type 2 family. In terms of assembly, homooctamer. Dimer of tetramers. The cofactor is FMN. It depends on NADPH as a cofactor. Mg(2+) serves as cofactor.

It is found in the cytoplasm. The catalysed reaction is isopentenyl diphosphate = dimethylallyl diphosphate. Involved in the biosynthesis of isoprenoids. Catalyzes the 1,3-allylic rearrangement of the homoallylic substrate isopentenyl (IPP) to its allylic isomer, dimethylallyl diphosphate (DMAPP). This Legionella pneumophila (strain Paris) protein is Isopentenyl-diphosphate delta-isomerase.